The sequence spans 298 residues: MFYSLMRESKIVIEYDGRGYHFDALSNYDASTSFQEFKTLRRTIHNRTNYADSIINAQDPSSISLAINFSTTLIESNFFDWMGFTREGNSLFLPRNTPNIEPIMFNMYIINHNNSCIYFENCYVSTVDFSLDKSIPILNVGIESGKFSEVSTFRDGYTITQGEVLPYSAPAVYTNSSPLPALISASMSFQQQCSWREDRNIFDINKIYTNKRAYVNEMNASATLAFYYVKRLVGDKFLNLDPETRTPLIIKNKYVSITFPLARISKRLNFSDLYQVEYDVIPTADSDPVEINFFGERK.

In terms of assembly, homotrimer. Forms a pseudo-hexameric ring. Interacts with collar protein p132, DTP-pb9 and tail tube protein pb6.

It localises to the virion. In terms of biological role, forms the simplified baseplate, together with the p132 collar protein ring and the cone (DTP-pb9 and BHP-pb3). The sequence is that of Baseplate tube protein p140 from Escherichia phage T5 (Enterobacteria phage T5).